The following is a 105-amino-acid chain: Larval cuticle protein 65Ag1 (105 aa).

The N-terminal stretch at 1–18 (MKFLIVFVALFAVALAAP) is a signal peptide. In terms of domain architecture, Chitin-binding type R&amp;R spans 34–103 (PESFKYDWET…PQGAHLPVAP (70 aa)).

In terms of biological role, component of the cuticle of the larva. In Drosophila melanogaster (Fruit fly), this protein is Larval cuticle protein 65Ag1.